The chain runs to 236 residues: Leucyl/phenylalanyl-tRNA--protein transferase (236 aa).

It belongs to the L/F-transferase family.

Its subcellular location is the cytoplasm. It carries out the reaction N-terminal L-lysyl-[protein] + L-leucyl-tRNA(Leu) = N-terminal L-leucyl-L-lysyl-[protein] + tRNA(Leu) + H(+). The catalysed reaction is N-terminal L-arginyl-[protein] + L-leucyl-tRNA(Leu) = N-terminal L-leucyl-L-arginyl-[protein] + tRNA(Leu) + H(+). The enzyme catalyses L-phenylalanyl-tRNA(Phe) + an N-terminal L-alpha-aminoacyl-[protein] = an N-terminal L-phenylalanyl-L-alpha-aminoacyl-[protein] + tRNA(Phe). Functionally, functions in the N-end rule pathway of protein degradation where it conjugates Leu, Phe and, less efficiently, Met from aminoacyl-tRNAs to the N-termini of proteins containing an N-terminal arginine or lysine. The chain is Leucyl/phenylalanyl-tRNA--protein transferase from Yersinia enterocolitica serotype O:8 / biotype 1B (strain NCTC 13174 / 8081).